Reading from the N-terminus, the 147-residue chain is Large ribosomal subunit protein uL15 (147 aa).

Residues 1-42 form a disordered region; that stretch reads MTIKVHHLRPAPGAKTTKTRVGRGEGSKGKTAGRGTKGSKAR.

It belongs to the universal ribosomal protein uL15 family. As to quaternary structure, part of the 50S ribosomal subunit.

Binds to the 23S rRNA. This Salinispora tropica (strain ATCC BAA-916 / DSM 44818 / JCM 13857 / NBRC 105044 / CNB-440) protein is Large ribosomal subunit protein uL15.